A 160-amino-acid chain; its full sequence is Putative pre-16S rRNA nuclease (160 aa).

The protein belongs to the YqgF nuclease family.

The protein resides in the cytoplasm. Its function is as follows. Could be a nuclease involved in processing of the 5'-end of pre-16S rRNA. In Gluconobacter oxydans (strain 621H) (Gluconobacter suboxydans), this protein is Putative pre-16S rRNA nuclease.